The chain runs to 468 residues: Histone acetyltransferase type B catalytic subunit (468 aa).

Ser8 carries the phosphoserine modification. Interaction with histone H4 N-terminus stretches follow at residues 44-46 (EEE) and 208-210 (YKF). Acetyl-CoA contacts are provided by residues 248 to 250 (FLI) and 255 to 261 (QKSGNGS). Glu283 (proton donor/acceptor) is an active-site residue. Positions 442 to 468 (SSNLKRKLDDDENTEGSSSKKARVEDA) are disordered.

This sequence belongs to the HAT1 family. Component of the HAT-B complex composed of at least HAT1 and HAT2. The HAT-B complex binds to histone H4 tail. In the nucleus, interacts with GSK1 and SSB1. In the cytoplasm, interacts with ATG3 and ATG9. In terms of processing, phosphorylated at Ser-8 by GSK1 in the nucleus which impairs its translocation to the cytoplasm through interfering the interaction between HAT1 and SSB1. Dephosphorylation under nutrient starvation conditions promotes the interaction between HAT1 and SSB1 and results in the translocation of HAT1 from the nucleus to the cytoplasm in order to acetylate ATG3 and ATG9.

The protein localises to the nucleus. The protein resides in the cytoplasm. Its subcellular location is the preautophagosomal structure. It carries out the reaction L-lysyl-[protein] + acetyl-CoA = N(6)-acetyl-L-lysyl-[protein] + CoA + H(+). In terms of biological role, catalytic component of the histone acetylase B (HAT-B) complex. Has intrinsic substrate specificity that modifies lysine in recognition sequence GXGKXG. Involved in DNA double-strand break repair. Required for appressorium turgor pressure, autophagy and conidial nuclear degradation. During the germination process and upon starvation conditions, translocates from the nucleus to the cytoplasm where it acetylates ATG3 at 'lys-262' and 'Lys-267', thus influencing autophagy through controlling ATG3-ATG8 interaction. Also acetylates ATG9 at 'Lys-621' to regulate ATG9 binding to vesicles, which is also important for autophagy and pathogenicity. This chain is Histone acetyltransferase type B catalytic subunit, found in Pyricularia oryzae (strain 70-15 / ATCC MYA-4617 / FGSC 8958) (Rice blast fungus).